A 190-amino-acid polypeptide reads, in one-letter code: Hypoxanthine/guanine phosphoribosyltransferase (190 aa).

The protein belongs to the purine/pyrimidine phosphoribosyltransferase family. Archaeal HPRT subfamily. In terms of assembly, homodimer.

Its subcellular location is the cytoplasm. The enzyme catalyses IMP + diphosphate = hypoxanthine + 5-phospho-alpha-D-ribose 1-diphosphate. The catalysed reaction is GMP + diphosphate = guanine + 5-phospho-alpha-D-ribose 1-diphosphate. It functions in the pathway purine metabolism; IMP biosynthesis via salvage pathway; IMP from hypoxanthine: step 1/1. Its function is as follows. Catalyzes a salvage reaction resulting in the formation of IMP that is energically less costly than de novo synthesis. The sequence is that of Hypoxanthine/guanine phosphoribosyltransferase from Methanobacterium lacus (strain AL-21).